The primary structure comprises 75 residues: MKAEIHPNYHSITVVMTDGTEYVTRSTWGNEGDKLNLDIDSKSHPAWTGGQQQMLDRGGRVSRFQKKFSGFLKKD.

Belongs to the bacterial ribosomal protein bL31 family. Type A subfamily. In terms of assembly, part of the 50S ribosomal subunit.

Its function is as follows. Binds the 23S rRNA. This chain is Large ribosomal subunit protein bL31, found in Rhodopseudomonas palustris (strain BisB18).